An 887-amino-acid chain; its full sequence is DNA mismatch repair protein MutS (887 aa).

621-628 is a binding site for ATP; sequence GPNMGGKS. A disordered region spans residues 828–853; it reads AEPEPNKPAAAAKTKPASPQPDLFAS. A compositionally biased stretch (low complexity) spans 834 to 848; it reads KPAAAAKTKPASPQP.

This sequence belongs to the DNA mismatch repair MutS family.

Its function is as follows. This protein is involved in the repair of mismatches in DNA. It is possible that it carries out the mismatch recognition step. This protein has a weak ATPase activity. In Saccharophagus degradans (strain 2-40 / ATCC 43961 / DSM 17024), this protein is DNA mismatch repair protein MutS.